A 481-amino-acid polypeptide reads, in one-letter code: MSLRVYNTMTGRKEEFEPLQPGKVGMYVCGVTVYDYCHIGHARANVVFDIIYRYLQFIGFDVTYVRNYTDVDDKIIKRANERGISSDTLAGEFIQAFDEDMNRLGLAEPTIQPKATCHIDHIVNLVQRLIDRGIAYESQGDVYFSVEDFPSYLKLSKRNMDEMRSGARITPGEQKRNPMDFALWKAAKPGEPSWESPWGPGRPGWHIECSAMSMEYLGESFDIHGGGKDLVFPHHENEIAQSEGATGKPFVKYWLHNGFVNVNQEKMSKSLGNFFTIRDILQTYDPEVLRFFILTAHYRSPIDFSDQNLQDARLGLSRFYEGLHAASEVLAACPPGDVTSEAGATLENVFREAMDDDFNTAAAIGHLFDAVRTINRLITEKGFRKNREKVAQVRALYDALLKLGGVLGLFVSDPAAWLKQMNLAMLATTGYTESDIEDFIRQRQEARKNKDFARADEIRDELAAKGIQLLDGPQGTAWKAR.

C29 lines the Zn(2+) pocket. Positions 31 to 41 match the 'HIGH' region motif; that stretch reads VTVYDYCHIGH. Positions 209, 234, and 238 each coordinate Zn(2+). The 'KMSKS' region motif lies at 266 to 270; the sequence is KMSKS. Position 269 (K269) interacts with ATP.

The protein belongs to the class-I aminoacyl-tRNA synthetase family. In terms of assembly, monomer. Zn(2+) serves as cofactor.

It localises to the cytoplasm. It catalyses the reaction tRNA(Cys) + L-cysteine + ATP = L-cysteinyl-tRNA(Cys) + AMP + diphosphate. In Syntrophotalea carbinolica (strain DSM 2380 / NBRC 103641 / GraBd1) (Pelobacter carbinolicus), this protein is Cysteine--tRNA ligase.